The chain runs to 102 residues: Fe-S protein maturation auxiliary factor YitW (102 aa).

This sequence belongs to the MIP18 family.

Functionally, involved in the maturation of iron-sulfur (Fe-S) proteins. May function as a Fe-S cluster carrier. The sequence is that of Fe-S protein maturation auxiliary factor YitW (yitW) from Bacillus subtilis (strain 168).